We begin with the raw amino-acid sequence, 252 residues long: 2-succinyl-6-hydroxy-2,4-cyclohexadiene-1-carboxylate synthase (252 aa).

Belongs to the AB hydrolase superfamily. MenH family. As to quaternary structure, monomer.

It carries out the reaction 5-enolpyruvoyl-6-hydroxy-2-succinyl-cyclohex-3-ene-1-carboxylate = (1R,6R)-6-hydroxy-2-succinyl-cyclohexa-2,4-diene-1-carboxylate + pyruvate. The protein operates within quinol/quinone metabolism; 1,4-dihydroxy-2-naphthoate biosynthesis; 1,4-dihydroxy-2-naphthoate from chorismate: step 3/7. It functions in the pathway quinol/quinone metabolism; menaquinone biosynthesis. Its function is as follows. Catalyzes a proton abstraction reaction that results in 2,5-elimination of pyruvate from 2-succinyl-5-enolpyruvyl-6-hydroxy-3-cyclohexene-1-carboxylate (SEPHCHC) and the formation of 2-succinyl-6-hydroxy-2,4-cyclohexadiene-1-carboxylate (SHCHC). The chain is 2-succinyl-6-hydroxy-2,4-cyclohexadiene-1-carboxylate synthase from Escherichia coli (strain K12 / MC4100 / BW2952).